The sequence spans 133 residues: Profilin Sal k 4.0301 (133 aa).

Cys95 and Cys117 are oxidised to a cystine.

It belongs to the profilin family. Occurs in many kinds of cells as a complex with monomeric actin in a 1:1 ratio. As to expression, expressed in pollen (at protein and mRNA level).

It is found in the cytoplasm. The protein localises to the cytoskeleton. In terms of biological role, binds to actin and affects the structure of the cytoskeleton. At high concentrations, profilin prevents the polymerization of actin, whereas it enhances it at low concentrations. The sequence is that of Profilin Sal k 4.0301 from Kali turgidum (Prickly saltwort).